We begin with the raw amino-acid sequence, 417 residues long: Hydroxysteroid dehydrogenase-like protein 2 (417 aa).

NADP(+)-binding positions include 17–23 (GASRGIG), Lys-42, and Asp-74. Tyr-168 (proton acceptor) is an active-site residue. Position 172 (Lys-172) interacts with NADP(+). The 109-residue stretch at 306–414 (ASPLQETFKA…KLEKILGQMN (109 aa)) folds into the SCP2 domain.

It belongs to the short-chain dehydrogenases/reductases (SDR) family.

It is found in the peroxisome. It localises to the mitochondrion. Functionally, has apparently no steroid dehydrogenase activity. Might act as a metabolic regulator that affects systemic adaptation to nutritional cues. In Xenopus laevis (African clawed frog), this protein is Hydroxysteroid dehydrogenase-like protein 2 (hsdl2).